A 399-amino-acid chain; its full sequence is 3-dehydroquinate synthase (399 aa).

Belongs to the archaeal-type DHQ synthase family.

The enzyme catalyses 2-amino-2,3,7-trideoxy-D-lyxo-hept-6-ulosonate + NAD(+) + H2O = 3-dehydroquinate + NH4(+) + NADH + H(+). Functionally, catalyzes the oxidative deamination and cyclization of 2-amino-3,7-dideoxy-D-threo-hept-6-ulosonic acid (ADH) to yield 3-dehydroquinate (DHQ), which is fed into the canonical shikimic pathway of aromatic amino acid biosynthesis. This is 3-dehydroquinate synthase from Haloquadratum walsbyi (strain DSM 16790 / HBSQ001).